We begin with the raw amino-acid sequence, 190 residues long: Putative CRISPR system CMR subunit Cmr7 2 (190 aa).

This sequence belongs to the CRISPR system Cmr7 family. In terms of assembly, homodimer.

CRISPR (clustered regularly interspaced short palindromic repeat) is an adaptive immune system that provides protection against mobile genetic elements (viruses, transposable elements and conjugative plasmids). CRISPR clusters contain spacers, sequences complementary to antecedent mobile elements, and target invading nucleic acids. CRISPR clusters are transcribed and processed into CRISPR RNA (crRNA). This is Putative CRISPR system CMR subunit Cmr7 2 (cmr7b) from Saccharolobus solfataricus (strain ATCC 35092 / DSM 1617 / JCM 11322 / P2) (Sulfolobus solfataricus).